Here is a 521-residue protein sequence, read N- to C-terminus: Cell cycle checkpoint protein hpr-9 (521 aa).

3 disordered regions span residues 1–20 (MQAIHENYTDNPSSSITRER), 318–375 (QHEE…NRFV), and 492–521 (GTETTSKMRMSQQFDKRLGPLVSDTQYESR). 2 stretches are compositionally biased toward polar residues: residues 355–370 (ESLSQEETTRSQSLPS) and 493–504 (TETTSKMRMSQQ).

This sequence belongs to the rad9 family. Putative component of the toroidal 9-1-1 (RAD9-RAD1-HUS1) complex, composed of hpr-9, mrt-2 and hus-1.

In terms of biological role, may be a component of the 9-1-1 cell-cycle checkpoint response complex that plays a major role in DNA repair. In Caenorhabditis elegans, this protein is Cell cycle checkpoint protein hpr-9.